A 423-amino-acid chain; its full sequence is Mitogen-activated protein kinase 9 (423 aa).

The 296-residue stretch at 26–321 (YQQLKPIGSG…VDEALRHPYI (296 aa)) folds into the Protein kinase domain. Residues 32–40 (IGSGAQGIV) and K55 each bind ATP. The Proton acceptor role is filled by D151. At T183 the chain carries Phosphothreonine; by MAP2K7. Positions 183 to 185 (TPY) match the TXY motif. Residue Y185 is modified to Phosphotyrosine; by MAP2K4. Over residues 366–375 (RSKNGVKDQP) the composition is skewed to basic and acidic residues. Positions 366 to 423 (RSKNGVKDQPSDAAVSSKATPSQSSSINDISSMSTEHTLASDTDSSLDASTGPLEGCR) are disordered. A compositionally biased stretch (low complexity) spans 387-416 (SQSSSINDISSMSTEHTLASDTDSSLDAST).

The protein belongs to the protein kinase superfamily. CMGC Ser/Thr protein kinase family. MAP kinase subfamily. In terms of assembly, interacts with MECOM. Binds to at least four scaffolding proteins, MAPK8IP1/JIP-1, MAPK8IP2/JIP-2, MAPK8IP3/JIP-3/JSAP1 and SPAG9/MAPK8IP4/JIP-4. These proteins also bind other components of the JNK signaling pathway. Interacts with NFATC4. Interacts with ATF7; the interaction does not phosphorylate ATF7 but acts as a docking site for ATF7-associated partners such as JUN. Interacts with BCL10. Interacts with CTNNB1 and GSK3B. Interacts with DCLK2. Interacts with MAPKBP1. Interacts with POU5F1; phosphorylates POU5F1 at 'Ser-347'. Found in a complex with SH3RF1, RAC2, MAP3K7/TAK1, MAP2K7/MKK7, MAPK8IP1/JIP1 and MAPK8/JNK1. It depends on Mg(2+) as a cofactor. Post-translationally, dually phosphorylated on Thr-183 and Tyr-185 by MAP2K7 and MAP2K4, which activates the enzyme. Autophosphorylated in vitro.

The protein localises to the cytoplasm. It is found in the nucleus. It carries out the reaction L-seryl-[protein] + ATP = O-phospho-L-seryl-[protein] + ADP + H(+). The catalysed reaction is L-threonyl-[protein] + ATP = O-phospho-L-threonyl-[protein] + ADP + H(+). Activated by threonine and tyrosine phosphorylation by either of two dual specificity kinases, MAP2K4 and MAP2K7. MAP2K4 shows a strong preference for Tyr-185 while MAP2K7 phosphorylates Tyr-183 preferentially. Inhibited by dual specificity phosphatases, such as DUSP1. Functionally, serine/threonine-protein kinase involved in various processes such as cell proliferation, differentiation, migration, transformation and programmed cell death. Extracellular stimuli such as pro-inflammatory cytokines or physical stress stimulate the stress-activated protein kinase/c-Jun N-terminal kinase (SAP/JNK) signaling pathway. In this cascade, two dual specificity kinases MAP2K4/MKK4 and MAP2K7/MKK7 phosphorylate and activate MAPK9/JNK2. In turn, MAPK9/JNK2 phosphorylates a number of transcription factors, primarily components of AP-1 such as JUN and ATF2 and thus regulates AP-1 transcriptional activity. In response to oxidative or ribotoxic stresses, inhibits rRNA synthesis by phosphorylating and inactivating the RNA polymerase 1-specific transcription initiation factor RRN3. Promotes stressed cell apoptosis by phosphorylating key regulatory factors including TP53 and YAP1. In T-cells, MAPK8 and MAPK9 are required for polarized differentiation of T-helper cells into Th1 cells. Upon T-cell receptor (TCR) stimulation, is activated by CARMA1, BCL10, MAP2K7 and MAP3K7/TAK1 to regulate JUN protein levels. Plays an important role in the osmotic stress-induced epithelial tight-junctions disruption. When activated, promotes beta-catenin/CTNNB1 degradation and inhibits the canonical Wnt signaling pathway. Also participates in neurite growth in spiral ganglion neurons. Phosphorylates the CLOCK-BMAL1 heterodimer and plays a role in the regulation of the circadian clock. Phosphorylates POU5F1, which results in the inhibition of POU5F1's transcriptional activity and enhances its proteasomal degradation. Phosphorylates ALKBH5 in response to reactive oxygen species (ROS), promoting ALKBH5 sumoylation and inactivation. The protein is Mitogen-activated protein kinase 9 (Mapk9) of Rattus norvegicus (Rat).